We begin with the raw amino-acid sequence, 431 residues long: Histidine--tRNA ligase (431 aa).

It belongs to the class-II aminoacyl-tRNA synthetase family. As to quaternary structure, homodimer.

It localises to the cytoplasm. The catalysed reaction is tRNA(His) + L-histidine + ATP = L-histidyl-tRNA(His) + AMP + diphosphate + H(+). The polypeptide is Histidine--tRNA ligase (Neisseria meningitidis serogroup A / serotype 4A (strain DSM 15465 / Z2491)).